A 55-amino-acid polypeptide reads, in one-letter code: ATP synthase F(0) complex subunit 8 (55 aa).

Residues 8-24 form a helical membrane-spanning segment; that stretch reads PWFMIMLMTWFTYSLLI.

This sequence belongs to the ATPase protein 8 family. In terms of assembly, component of the ATP synthase complex composed at least of ATP5F1A/subunit alpha, ATP5F1B/subunit beta, ATP5MC1/subunit c (homooctomer), MT-ATP6/subunit a, MT-ATP8/subunit 8, ATP5ME/subunit e, ATP5MF/subunit f, ATP5MG/subunit g, ATP5MK/subunit k, ATP5MJ/subunit j, ATP5F1C/subunit gamma, ATP5F1D/subunit delta, ATP5F1E/subunit epsilon, ATP5PF/subunit F6, ATP5PB/subunit b, ATP5PD/subunit d, ATP5PO/subunit OSCP. ATP synthase complex consists of a soluble F(1) head domain (subunits alpha(3) and beta(3)) - the catalytic core - and a membrane F(0) domain - the membrane proton channel (subunits c, a, 8, e, f, g, k and j). These two domains are linked by a central stalk (subunits gamma, delta, and epsilon) rotating inside the F1 region and a stationary peripheral stalk (subunits F6, b, d, and OSCP).

It localises to the mitochondrion membrane. Its function is as follows. Subunit 8, of the mitochondrial membrane ATP synthase complex (F(1)F(0) ATP synthase or Complex V) that produces ATP from ADP in the presence of a proton gradient across the membrane which is generated by electron transport complexes of the respiratory chain. ATP synthase complex consist of a soluble F(1) head domain - the catalytic core - and a membrane F(1) domain - the membrane proton channel. These two domains are linked by a central stalk rotating inside the F(1) region and a stationary peripheral stalk. During catalysis, ATP synthesis in the catalytic domain of F(1) is coupled via a rotary mechanism of the central stalk subunits to proton translocation. In vivo, can only synthesize ATP although its ATP hydrolase activity can be activated artificially in vitro. Part of the complex F(0) domain. The chain is ATP synthase F(0) complex subunit 8 from Coturnix japonica (Japanese quail).